The following is a 130-amino-acid chain: Fluoride-specific ion channel FluC 2 (130 aa).

Transmembrane regions (helical) follow at residues 4–24 (GLST…GAIC), 38–58 (NLWG…FFLA), 72–92 (LYLL…SLIL), and 103–123 (WMEL…FISL). 2 residues coordinate Na(+): Gly82 and Ser85.

The protein belongs to the fluoride channel Fluc/FEX (TC 1.A.43) family.

The protein resides in the cell inner membrane. The catalysed reaction is fluoride(in) = fluoride(out). With respect to regulation, na(+) is not transported, but it plays an essential structural role and its presence is essential for fluoride channel function. Fluoride-specific ion channel. Important for reducing fluoride concentration in the cell, thus reducing its toxicity. In Prochlorococcus marinus (strain SARG / CCMP1375 / SS120), this protein is Fluoride-specific ion channel FluC 2.